Here is a 336-residue protein sequence, read N- to C-terminus: Phosphoribosylformylglycinamidine cyclo-ligase (336 aa).

Belongs to the AIR synthase family.

The protein localises to the cytoplasm. It catalyses the reaction 2-formamido-N(1)-(5-O-phospho-beta-D-ribosyl)acetamidine + ATP = 5-amino-1-(5-phospho-beta-D-ribosyl)imidazole + ADP + phosphate + H(+). It functions in the pathway purine metabolism; IMP biosynthesis via de novo pathway; 5-amino-1-(5-phospho-D-ribosyl)imidazole from N(2)-formyl-N(1)-(5-phospho-D-ribosyl)glycinamide: step 2/2. This chain is Phosphoribosylformylglycinamidine cyclo-ligase, found in Caldanaerobacter subterraneus subsp. tengcongensis (strain DSM 15242 / JCM 11007 / NBRC 100824 / MB4) (Thermoanaerobacter tengcongensis).